Here is a 304-residue protein sequence, read N- to C-terminus: Glycine--tRNA ligase alpha subunit (304 aa).

This sequence belongs to the class-II aminoacyl-tRNA synthetase family. Tetramer of two alpha and two beta subunits.

Its subcellular location is the cytoplasm. The enzyme catalyses tRNA(Gly) + glycine + ATP = glycyl-tRNA(Gly) + AMP + diphosphate. The protein is Glycine--tRNA ligase alpha subunit of Tolumonas auensis (strain DSM 9187 / NBRC 110442 / TA 4).